The chain runs to 350 residues: Sperm equatorial segment protein 1 (350 aa).

Residues 1-19 (MKPLVLLVALLLWPSSVPA) form the signal peptide. An N-linked (GlcNAc...) asparagine glycan is attached at N128.

It belongs to the SPESP1 family. Post-translationally, glycosylated. In testis there are two predominant forms of 77- and 67-kDa and a form of 47-kDa, whereas in epididymal sperm from caput, corpus, and cauda there are two forms of 47- and 43-kDa. Testis forms contain complex carbohydrate residues. Epididymal sperm forms are N-glycosylated. Then undergoes significant glycosylation in the testis and that the majority of these glycoconjugates are removed by the time sperm reach the caput epididymis. Highly expressed in testis, where it is localized in the acrosome of postmeiotic stages of spermiogenesis (round and elongating spermatids and in ejaculated spermatozoa) (at protein level). Poorly expressed in placenta and fetal lung.

The protein resides in the cytoplasmic vesicle. It localises to the secretory vesicle. Its subcellular location is the acrosome. Involved in fertilization ability of sperm. The polypeptide is Sperm equatorial segment protein 1 (Homo sapiens (Human)).